The sequence spans 457 residues: Methylenetetrahydrofolate--tRNA-(uracil-5-)-methyltransferase TrmFO (457 aa).

7–12 (GAGLAG) contributes to the FAD binding site. Residues 38–58 (FTSRQDEKTGTHDVRNATQTR) form a disordered region. The segment covering 40-52 (SRQDEKTGTHDVR) has biased composition (basic and acidic residues).

This sequence belongs to the MnmG family. TrmFO subfamily. Requires FAD as cofactor.

The protein resides in the cytoplasm. It catalyses the reaction uridine(54) in tRNA + (6R)-5,10-methylene-5,6,7,8-tetrahydrofolate + NADH + H(+) = 5-methyluridine(54) in tRNA + (6S)-5,6,7,8-tetrahydrofolate + NAD(+). The catalysed reaction is uridine(54) in tRNA + (6R)-5,10-methylene-5,6,7,8-tetrahydrofolate + NADPH + H(+) = 5-methyluridine(54) in tRNA + (6S)-5,6,7,8-tetrahydrofolate + NADP(+). Catalyzes the folate-dependent formation of 5-methyl-uridine at position 54 (M-5-U54) in all tRNAs. The protein is Methylenetetrahydrofolate--tRNA-(uracil-5-)-methyltransferase TrmFO of Hydrogenobaculum sp. (strain Y04AAS1).